The chain runs to 421 residues: Gamma-glutamyl phosphate reductase (421 aa).

The protein belongs to the gamma-glutamyl phosphate reductase family.

It localises to the cytoplasm. It carries out the reaction L-glutamate 5-semialdehyde + phosphate + NADP(+) = L-glutamyl 5-phosphate + NADPH + H(+). It participates in amino-acid biosynthesis; L-proline biosynthesis; L-glutamate 5-semialdehyde from L-glutamate: step 2/2. In terms of biological role, catalyzes the NADPH-dependent reduction of L-glutamate 5-phosphate into L-glutamate 5-semialdehyde and phosphate. The product spontaneously undergoes cyclization to form 1-pyrroline-5-carboxylate. This chain is Gamma-glutamyl phosphate reductase, found in Roseobacter denitrificans (strain ATCC 33942 / OCh 114) (Erythrobacter sp. (strain OCh 114)).